Consider the following 53-residue polypeptide: Snake venom serine protease LmrSP-4 (53 aa).

Cys26 and Cys42 are oxidised to a cystine. His41 functions as the Charge relay system in the catalytic mechanism.

Monomer. Post-translationally, N-glycosylated. As to expression, expressed by the venom gland.

It localises to the secreted. Inhibited by the small molecule serine protease inhibitors phenylmethylsulfonyl fluoride (PMSF) and benzamidine. In terms of biological role, snake venom serine protease that has fibrinogenolytic activity. Hydrolyzes the alpha-chain of fibrinogen (FGA), without affecting the beta- and the gamma-chains. Also displays hydrolytic activity towards S-2302 (plasma kallikrein substrate) and S-2251 (substrate for plasmin), but has no hydrolytic activity with S-2238 (thrombin substrate) or S-2222 (factor Xa). This chain is Snake venom serine protease LmrSP-4, found in Lachesis muta rhombeata (Bushmaster).